A 467-amino-acid chain; its full sequence is Chromosomal replication initiator protein DnaA (467 aa).

The interval 1–90 (MSLSLWQQCL…KSVTQTPQAA (90 aa)) is domain I, interacts with DnaA modulators. The interval 91–130 (VTSNVAAPAQVAQTQPQRAAPSTRSGWDNVPAPAEPTYRS) is domain II. The span at 97 to 111 (APAQVAQTQPQRAAP) shows a compositional bias: low complexity. The interval 97-119 (APAQVAQTQPQRAAPSTRSGWDN) is disordered. A domain III, AAA+ region region spans residues 131-347 (NVNVKHTFDN…GALNRVIANA (217 aa)). Positions 175, 177, 178, and 179 each coordinate ATP. The tract at residues 348–467 (NFTGRAITID…FSNLIRTLSS (120 aa)) is domain IV, binds dsDNA.

It belongs to the DnaA family. Oligomerizes as a right-handed, spiral filament on DNA at oriC.

Its subcellular location is the cytoplasm. Plays an essential role in the initiation and regulation of chromosomal replication. ATP-DnaA binds to the origin of replication (oriC) to initiate formation of the DNA replication initiation complex once per cell cycle. Binds the DnaA box (a 9 base pair repeat at the origin) and separates the double-stranded (ds)DNA. Forms a right-handed helical filament on oriC DNA; dsDNA binds to the exterior of the filament while single-stranded (ss)DNA is stabiized in the filament's interior. The ATP-DnaA-oriC complex binds and stabilizes one strand of the AT-rich DNA unwinding element (DUE), permitting loading of DNA polymerase. After initiation quickly degrades to an ADP-DnaA complex that is not apt for DNA replication. Binds acidic phospholipids. In Escherichia coli O157:H7, this protein is Chromosomal replication initiator protein DnaA.